Consider the following 288-residue polypeptide: Structure-specific endonuclease subunit SLX1 (288 aa).

The region spanning 10 to 93 (DFYCSYLLRS…QHSYKTRFIE (84 aa)) is the GIY-YIG domain. The segment at 209–265 (CMICDKKIDYIHDEGTQMVGFCSDDECDFLSCLSCLYKEFTKNSKQIIPKSGHCPNC) adopts an SLX1-type zinc-finger fold.

This sequence belongs to the SLX1 family. As to quaternary structure, forms a heterodimer with SLX4. It depends on a divalent metal cation as a cofactor.

It localises to the nucleus. Functionally, catalytic subunit of the SLX1-SLX4 structure-specific endonuclease that resolves DNA secondary structures generated during DNA repair and recombination. Has endonuclease activity towards branched DNA substrates, introducing single-strand cuts in duplex DNA close to junctions with ss-DNA. The chain is Structure-specific endonuclease subunit SLX1 from Kluyveromyces lactis (strain ATCC 8585 / CBS 2359 / DSM 70799 / NBRC 1267 / NRRL Y-1140 / WM37) (Yeast).